Here is a 342-residue protein sequence, read N- to C-terminus: D-erythrose-4-phosphate dehydrogenase (342 aa).

Position 12–13 (12–13 (RI)) interacts with NAD(+). Residues 154–156 (SCT), Arg-200, 213–214 (TK), and Arg-236 each bind substrate. Cys-155 (nucleophile) is an active-site residue. Asn-318 contacts NAD(+).

It belongs to the glyceraldehyde-3-phosphate dehydrogenase family. Epd subfamily. Homotetramer.

The protein localises to the cytoplasm. It catalyses the reaction D-erythrose 4-phosphate + NAD(+) + H2O = 4-phospho-D-erythronate + NADH + 2 H(+). The protein operates within cofactor biosynthesis; pyridoxine 5'-phosphate biosynthesis; pyridoxine 5'-phosphate from D-erythrose 4-phosphate: step 1/5. Catalyzes the NAD-dependent conversion of D-erythrose 4-phosphate to 4-phosphoerythronate. In Salmonella arizonae (strain ATCC BAA-731 / CDC346-86 / RSK2980), this protein is D-erythrose-4-phosphate dehydrogenase.